A 291-amino-acid chain; its full sequence is ADP-dependent (S)-NAD(P)H-hydrate dehydratase (291 aa).

Residues 5–273 (SKDILEEVIT…QALPTYMKKY (269 aa)) form the YjeF C-terminal domain. 3 residues coordinate (6S)-NADPHX: Ala-40, Gly-103, and His-153. Residue Gly-215 coordinates AMP. Asp-216 is a binding site for (6S)-NADPHX.

It belongs to the NnrD/CARKD family. As to quaternary structure, homotetramer. The cofactor is Mg(2+).

It carries out the reaction (6S)-NADHX + ADP = AMP + phosphate + NADH + H(+). The enzyme catalyses (6S)-NADPHX + ADP = AMP + phosphate + NADPH + H(+). In terms of biological role, catalyzes the dehydration of the S-form of NAD(P)HX at the expense of ADP, which is converted to AMP. Together with NAD(P)HX epimerase, which catalyzes the epimerization of the S- and R-forms, the enzyme allows the repair of both epimers of NAD(P)HX, a damaged form of NAD(P)H that is a result of enzymatic or heat-dependent hydration. This chain is ADP-dependent (S)-NAD(P)H-hydrate dehydratase, found in Enterococcus faecalis (strain ATCC 700802 / V583).